The following is a 151-amino-acid chain: Cell division protein SepF (151 aa).

Acidic residues predominate over residues 17–29 (DNEDDYQDQEDEQ). The segment at 17-42 (DNEDDYQDQEDEQAQQPAPEQPVDNH) is disordered.

This sequence belongs to the SepF family. As to quaternary structure, homodimer. Interacts with FtsZ.

The protein localises to the cytoplasm. Its function is as follows. Cell division protein that is part of the divisome complex and is recruited early to the Z-ring. Probably stimulates Z-ring formation, perhaps through the cross-linking of FtsZ protofilaments. Its function overlaps with FtsA. In Lacticaseibacillus casei (strain BL23) (Lactobacillus casei), this protein is Cell division protein SepF.